Consider the following 212-residue polypeptide: Holliday junction branch migration complex subunit RuvA (212 aa).

Positions 1-66 (MISGLKGTLK…ERGQKLFGFL (66 aa)) are domain I. The tract at residues 67–145 (TEQDKEFFKV…KLELFLSGTS (79 aa)) is domain II. The interval 146–162 (KEPSISLSSFSETPEEA) is flexible linker. A domain III region spans residues 163–212 (ALSRKREIAILGLVQLGFEEKTASKEVDKILKSSSPTDPGEIIREILKSL).

Belongs to the RuvA family. As to quaternary structure, homotetramer. Forms an RuvA(8)-RuvB(12)-Holliday junction (HJ) complex. HJ DNA is sandwiched between 2 RuvA tetramers; dsDNA enters through RuvA and exits via RuvB. An RuvB hexamer assembles on each DNA strand where it exits the tetramer. Each RuvB hexamer is contacted by two RuvA subunits (via domain III) on 2 adjacent RuvB subunits; this complex drives branch migration. In the full resolvosome a probable DNA-RuvA(4)-RuvB(12)-RuvC(2) complex forms which resolves the HJ.

The protein resides in the cytoplasm. The RuvA-RuvB-RuvC complex processes Holliday junction (HJ) DNA during genetic recombination and DNA repair, while the RuvA-RuvB complex plays an important role in the rescue of blocked DNA replication forks via replication fork reversal (RFR). RuvA specifically binds to HJ cruciform DNA, conferring on it an open structure. The RuvB hexamer acts as an ATP-dependent pump, pulling dsDNA into and through the RuvAB complex. HJ branch migration allows RuvC to scan DNA until it finds its consensus sequence, where it cleaves and resolves the cruciform DNA. The sequence is that of Holliday junction branch migration complex subunit RuvA from Leptospira borgpetersenii serovar Hardjo-bovis (strain JB197).